We begin with the raw amino-acid sequence, 38 residues long: Large ribosomal subunit protein bL36 (38 aa).

The protein belongs to the bacterial ribosomal protein bL36 family.

In Acinetobacter baylyi (strain ATCC 33305 / BD413 / ADP1), this protein is Large ribosomal subunit protein bL36.